We begin with the raw amino-acid sequence, 652 residues long: Acetyl-coenzyme A synthetase (652 aa).

CoA is bound by residues 191–194, Thr-311, and Asn-335; that span reads RAGR. ATP contacts are provided by residues 387–389, 411–416, Asp-500, and Arg-515; these read GEP and DTWWQT. Ser-523 is a CoA binding site. Residue Arg-526 participates in ATP binding. The Mg(2+) site is built by Val-537, His-539, and Ile-542. Arg-584 provides a ligand contact to CoA. Lys-609 carries the post-translational modification N6-acetyllysine.

It belongs to the ATP-dependent AMP-binding enzyme family. The cofactor is Mg(2+). Acetylated. Deacetylation by the SIR2-homolog deacetylase activates the enzyme.

The catalysed reaction is acetate + ATP + CoA = acetyl-CoA + AMP + diphosphate. In terms of biological role, catalyzes the conversion of acetate into acetyl-CoA (AcCoA), an essential intermediate at the junction of anabolic and catabolic pathways. Acs undergoes a two-step reaction. In the first half reaction, Acs combines acetate with ATP to form acetyl-adenylate (AcAMP) intermediate. In the second half reaction, it can then transfer the acetyl group from AcAMP to the sulfhydryl group of CoA, forming the product AcCoA. Its function is as follows. Enables the cell to use acetate during aerobic growth to generate energy via the TCA cycle, and biosynthetic compounds via the glyoxylate shunt. Acetylates CheY, the response regulator involved in flagellar movement and chemotaxis. The sequence is that of Acetyl-coenzyme A synthetase from Cronobacter sakazakii (strain ATCC BAA-894) (Enterobacter sakazakii).